A 216-amino-acid chain; its full sequence is NKG2-D type II integral membrane protein (216 aa).

The Cytoplasmic segment spans residues 1-51 (MGWIRGRRPRHNLEMSEFHNYKLGLAKSDFSTRCQKQRCPVIKSKCRENAS). The chain crosses the membrane as a helical; Signal-anchor for type II membrane protein span at residues 52 to 72 (PLFFCCFIAVAMGIRFIIMVT). The Extracellular portion of the chain corresponds to 73-216 (IWSAVFLNSL…NTYICMQRTV (144 aa)). Cystine bridges form between Cys96–Cys105 and Cys99–Cys110. Residues 98–213 (PCPKNWICYK…SIPNTYICMQ (116 aa)) form the C-type lectin domain. N-linked (GlcNAc...) asparagine glycosylation is found at Asn115, Asn131, Asn163, and Asn202. 2 cysteine pairs are disulfide-bonded: Cys127–Cys211 and Cys189–Cys203.

In terms of assembly, homodimer; disulfide-linked. Heterohexamer composed of two subunits of KLRK1 and four subunits of HCST/DAP10. Interacts (via transmembrane domain) with HCST/DAP10 (via transmembrane domain); the interaction is required for KLRK1 NK cell surface and induces NK cell-mediated cytotoxicity. Can form disulfide-bonded heterodimer with CD94. Interacts with CEACAM1; recruits PTPN6 that dephosphorylates VAV1. In terms of tissue distribution, natural killer cells.

The protein localises to the cell membrane. Functions as an activating and costimulatory receptor involved in immunosurveillance upon binding to various cellular stress-inducible ligands displayed at the surface of autologous tumor cells and virus-infected cells. Provides both stimulatory and costimulatory innate immune responses on activated killer (NK) cells, leading to cytotoxic activity. Acts as a costimulatory receptor for T-cell receptor (TCR) in CD8(+) T-cell-mediated adaptive immune responses by amplifying T-cell activation. Stimulates perforin-mediated elimination of ligand-expressing tumor cells. Signaling involves calcium influx, culminating in the expression of TNF-alpha. Participates in NK cell-mediated bone marrow graft rejection. May play a regulatory role in differentiation and survival of NK cells. Binds to ligands belonging to various subfamilies of MHC class I-related glycoproteins. The sequence is that of NKG2-D type II integral membrane protein (KLRK1) from Macaca fascicularis (Crab-eating macaque).